The sequence spans 286 residues: Alpha-ketoglutarate-dependent dioxygenase alkB homolog 3 (286 aa).

The interval 21–45 (QAIAQPATTAKSHLHQKPGQTWKNK) is disordered. Positions 22–31 (AIAQPATTAK) are enriched in polar residues. Substrate is bound by residues tryptophan 115 and 141–143 (YTY). The Fe2OG dioxygenase domain maps to 172–278 (TFNSLLCNLY…RVNLTFRTVY (107 aa)). Residue leucine 177 is modified to (4R)-5-hydroxyleucine; alternate. The residue at position 177 (leucine 177) is a (4R)-5-oxoleucine; alternate. Position 179–181 (179–181 (NLY)) interacts with 2-oxoglutarate. Histidine 191 and aspartate 193 together coordinate Fe cation. Substrate is bound at residue aspartate 194. Histidine 257 is a binding site for Fe cation. 2-oxoglutarate-binding positions include 269–275 (RVNLTFR) and arginine 275.

It belongs to the alkB family. In terms of assembly, interacts with the ASCC complex composed of ASCC1, ASCC2 and ASCC3. Interacts directly with ASCC3, and is thereby recruited to the ASCC complex. Interacts with OTUD4; the interaction is direct. Interacts with USP7 and USP9X. Requires Fe(2+) as cofactor. Post-translationally, ubiquitinated; undergoes 'Lys-48'-linked polyubiquitination. OTUD4 promotes USP7 and USP9X-dependent deubiquitination of 'Lys-48'-polyubiquitinated ALKBH3 promoting the repair of alkylated DNA lesions. In terms of tissue distribution, ubiquitous. Detected in heart, pancreas, skeletal muscle, thymus, testis, ovary, spleen, prostate, small intestine, peripheral blood leukocytes, urinary bladder and colon.

The protein localises to the nucleus. Its subcellular location is the cytoplasm. It catalyses the reaction an N(1)-methyladenosine in mRNA + 2-oxoglutarate + O2 = an adenosine in mRNA + formaldehyde + succinate + CO2. It carries out the reaction a methylated nucleobase within DNA + 2-oxoglutarate + O2 = a nucleobase within DNA + formaldehyde + succinate + CO2. The enzyme catalyses an N(1)-methyl-2'-deoxyadenosine in single-stranded DNA + 2-oxoglutarate + O2 = a 2'-deoxyadenosine in single-stranded DNA + formaldehyde + succinate + CO2 + H(+). The catalysed reaction is an N(3)-methyl-2'-deoxycytidine in single-stranded DNA + 2-oxoglutarate + O2 = a 2'-deoxycytidine in single-stranded DNA + formaldehyde + succinate + CO2 + H(+). It catalyses the reaction a 3,N(4)-etheno-2'-deoxycytidine in single-stranded DNA + 2-oxoglutarate + O2 + H2O = a 2'-deoxycytidine in single-stranded DNA + glyoxal + succinate + CO2. Activated by ascorbate. Its function is as follows. Dioxygenase that mediates demethylation of DNA and RNA containing 1-methyladenosine (m1A). Repairs alkylated DNA containing 1-methyladenosine (m1A) and 3-methylcytosine (m3C) by oxidative demethylation. Has a strong preference for single-stranded DNA. Able to process alkylated m3C within double-stranded regions via its interaction with ASCC3, which promotes DNA unwinding to generate single-stranded substrate needed for ALKBH3. Can repair exocyclic 3,N4-ethenocytosine adducs in single-stranded DNA. Also acts on RNA. Demethylates N(1)-methyladenosine (m1A) RNA, an epigenetic internal modification of messenger RNAs (mRNAs) highly enriched within 5'-untranslated regions (UTRs) and in the vicinity of start codons. Requires molecular oxygen, alpha-ketoglutarate and iron. This chain is Alpha-ketoglutarate-dependent dioxygenase alkB homolog 3, found in Homo sapiens (Human).